Reading from the N-terminus, the 992-residue chain is Vacuolar membrane protease (992 aa).

At 1–24 (MSPAMANPRVRKFNPIAFTPLPVT) the chain is on the cytoplasmic side. A helical transmembrane segment spans residues 25–45 (FITTIVYLAVLILVLVTYLVV). The Vacuolar portion of the chain corresponds to 46 to 390 (PPAPTLEMSP…SAFAVFRLHT (345 aa)). 3 N-linked (GlcNAc...) asparagine glycosylation sites follow: Asn59, Asn115, and Asn118. Residues His174 and Asp186 each contribute to the Zn(2+) site. Catalysis depends on Glu220, which acts as the Proton acceptor. Glu221 serves as a coordination point for Zn(2+). An N-linked (GlcNAc...) asparagine glycan is attached at Asn237. Zn(2+)-binding residues include Glu246 and His319. The chain crosses the membrane as a helical span at residues 391–411 (LFALSVTLLVIGPLVLFITSI). Residues 412 to 446 (ALSKTDRMYLFSMSKSLGGASETVSLRGLRGLFRT) lie on the Cytoplasmic side of the membrane. The helical transmembrane segment at 447 to 467 (PIILTVTTVIPIGLAYLLEKI) threads the bilayer. The Vacuolar portion of the chain corresponds to 468 to 474 (NPYIVHS). A helical transmembrane segment spans residues 475–495 (SQFAVWSMMLSVWIFVAWFLA). Topologically, residues 496–508 (RVADFFRPSALHR) are cytoplasmic. Residues 509–529 (AYSYTWIFIVTWIMLVISTVY) form a helical membrane-spanning segment. Over 530 to 533 (ANQK) the chain is Vacuolar. The helical transmembrane segment at 534 to 554 (GIAAGYFTFFYFAAVFLATWV) threads the bilayer. Topologically, residues 555–671 (SYLELFSLPR…WSWTLPRWTW (117 aa)) are cytoplasmic. The disordered stretch occupies residues 579-620 (RSSSLSSRLLTPSADELPSDIGPNGAENVGDPDETDPTESTS). A helical transmembrane segment spans residues 672-692 (ILQLLLLAPIVIILVGQVGLL). The Vacuolar portion of the chain corresponds to 693–708 (LTTAMSQIGSDGVSTF). Residues 709–729 (IVYLACALFSTLLFAPLLPFI) form a helical membrane-spanning segment. Topologically, residues 730–736 (HRFTYHV) are cytoplasmic. A helical transmembrane segment spans residues 737-757 (PTFLLLIFIGTLIYNLVAFPF). The Vacuolar segment spans residues 758-992 (SPANRLKIFF…VEASHDFIIQ (235 aa)). Residues Asn805, Asn846, and Asn954 are each glycosylated (N-linked (GlcNAc...) asparagine).

Belongs to the peptidase M28 family. Zn(2+) is required as a cofactor.

Its subcellular location is the vacuole membrane. May be involved in vacuolar sorting and osmoregulation. The protein is Vacuolar membrane protease of Paracoccidioides brasiliensis (strain Pb03).